The following is a 211-amino-acid chain: Holliday junction resolvase RecU (211 aa).

Residues Thr87, Asp89, Asp102, and Gln121 each contribute to the Mg(2+) site.

It belongs to the RecU family. Mg(2+) is required as a cofactor.

Its subcellular location is the cytoplasm. The enzyme catalyses Endonucleolytic cleavage at a junction such as a reciprocal single-stranded crossover between two homologous DNA duplexes (Holliday junction).. Functionally, endonuclease that resolves Holliday junction intermediates in genetic recombination. Cleaves mobile four-strand junctions by introducing symmetrical nicks in paired strands. Promotes annealing of linear ssDNA with homologous dsDNA. Required for DNA repair, homologous recombination and chromosome segregation. The chain is Holliday junction resolvase RecU from Limosilactobacillus fermentum (strain NBRC 3956 / LMG 18251) (Lactobacillus fermentum).